We begin with the raw amino-acid sequence, 334 residues long: Galactinol synthase 4 (334 aa).

The active site involves lysine 104. Aspartate 120, aspartate 122, and histidine 258 together coordinate Mn(2+).

Belongs to the glycosyltransferase 8 family. Galactosyltransferase subfamily. A divalent metal cation is required as a cofactor.

It localises to the cytoplasm. It carries out the reaction myo-inositol + UDP-alpha-D-galactose = alpha-D-galactosyl-(1-&gt;3)-1D-myo-inositol + UDP + H(+). Galactinol synthase involved in the biosynthesis of raffinose family oligosaccharides (RFOs) that function as osmoprotectants. May promote plant stress tolerance. In Arabidopsis thaliana (Mouse-ear cress), this protein is Galactinol synthase 4 (GOLS4).